The chain runs to 635 residues: Threonine--tRNA ligase (635 aa).

Residues 1–61 (MINIKFPDGS…NHDCELRLIT (61 aa)) form the TGS domain. The segment at 242-533 (DHRKIGKALD…LIEHYAGNMP (292 aa)) is catalytic. Zn(2+)-binding residues include C333, H384, and H510.

This sequence belongs to the class-II aminoacyl-tRNA synthetase family. In terms of assembly, homodimer. Zn(2+) serves as cofactor.

The protein resides in the cytoplasm. It catalyses the reaction tRNA(Thr) + L-threonine + ATP = L-threonyl-tRNA(Thr) + AMP + diphosphate + H(+). Catalyzes the attachment of threonine to tRNA(Thr) in a two-step reaction: L-threonine is first activated by ATP to form Thr-AMP and then transferred to the acceptor end of tRNA(Thr). Also edits incorrectly charged L-seryl-tRNA(Thr). This Francisella philomiragia subsp. philomiragia (strain ATCC 25017 / CCUG 19701 / FSC 153 / O#319-036) protein is Threonine--tRNA ligase.